Consider the following 192-residue polypeptide: uncharacterized protein (192 aa).

The region spanning 29–160 (QRQAAVLIPV…PLDVYRRGNS (132 aa)) is the Nudix hydrolase domain. Positions 67 to 89 (GAVDSTDASLIAAALREAQEEVA) match the Nudix box motif. Residues glutamate 83 and glutamate 87 each contribute to the Mg(2+) site.

The protein belongs to the Nudix hydrolase family. PCD1 subfamily. Requires Mn(2+) as cofactor. Mg(2+) serves as cofactor.

Its function is as follows. Probably mediates the hydrolysis of some nucleoside diphosphate derivatives. This is an uncharacterized protein from Salmonella agona (strain SL483).